A 631-amino-acid chain; its full sequence is Glutamyl-tRNA(Gln) amidotransferase subunit E (631 aa).

This sequence belongs to the GatB/GatE family. GatE subfamily. As to quaternary structure, heterodimer of GatD and GatE.

It catalyses the reaction L-glutamyl-tRNA(Gln) + L-glutamine + ATP + H2O = L-glutaminyl-tRNA(Gln) + L-glutamate + ADP + phosphate + H(+). In terms of biological role, allows the formation of correctly charged Gln-tRNA(Gln) through the transamidation of misacylated Glu-tRNA(Gln) in organisms which lack glutaminyl-tRNA synthetase. The reaction takes place in the presence of glutamine and ATP through an activated gamma-phospho-Glu-tRNA(Gln). The GatDE system is specific for glutamate and does not act on aspartate. The polypeptide is Glutamyl-tRNA(Gln) amidotransferase subunit E (Methanococcus maripaludis (strain C6 / ATCC BAA-1332)).